We begin with the raw amino-acid sequence, 172 residues long: Adenine phosphoribosyltransferase (172 aa).

Belongs to the purine/pyrimidine phosphoribosyltransferase family. In terms of assembly, homodimer.

Its subcellular location is the cytoplasm. The catalysed reaction is AMP + diphosphate = 5-phospho-alpha-D-ribose 1-diphosphate + adenine. It participates in purine metabolism; AMP biosynthesis via salvage pathway; AMP from adenine: step 1/1. Functionally, catalyzes a salvage reaction resulting in the formation of AMP, that is energically less costly than de novo synthesis. The sequence is that of Adenine phosphoribosyltransferase from Prochlorococcus marinus (strain NATL1A).